The following is a 469-amino-acid chain: Glutamate--tRNA ligase (469 aa).

The short motif at P11–N21 is the 'HIGH' region element. Basic and acidic residues predominate over residues Q114–P131. The segment at Q114 to P139 is disordered. The short motif at K243–R247 is the 'KMSKS' region element. Residue K246 coordinates ATP.

Belongs to the class-I aminoacyl-tRNA synthetase family. Glutamate--tRNA ligase type 1 subfamily. As to quaternary structure, monomer.

It localises to the cytoplasm. It catalyses the reaction tRNA(Glu) + L-glutamate + ATP = L-glutamyl-tRNA(Glu) + AMP + diphosphate. In terms of biological role, catalyzes the attachment of glutamate to tRNA(Glu) in a two-step reaction: glutamate is first activated by ATP to form Glu-AMP and then transferred to the acceptor end of tRNA(Glu). The polypeptide is Glutamate--tRNA ligase (Paraburkholderia xenovorans (strain LB400)).